A 261-amino-acid polypeptide reads, in one-letter code: Aquaporin-8 (261 aa).

The Cytoplasmic segment spans residues 1 to 36 (MSGEQTPMCSMDLPEVKVKTSMAGRCRVFWYEQYVQ). A helical transmembrane segment spans residues 37-57 (PCIVELVGSALFIFIGCLSVI). C53 carries the cysteine persulfide modification. C53 carries the cysteine sulfenic acid (-SOH) modification. Residues 58-84 (ENSPNTGLLQPALAHGLALGLIIATLG) are Extracellular-facing. A helical membrane pass occupies residues 85–105 (NISGGHFNPAVSLAVTVIGGL). The NPA 1 motif lies at 92 to 94 (NPA). The Cytoplasmic segment spans residues 106-107 (KT). A helical membrane pass occupies residues 108 to 128 (MLLIPYWISQLFGGLIGAALA). Residues 129–156 (KVVSPEERFWNASGAAFAIVQEQEQVAE) lie on the Extracellular side of the membrane. Residue N139 is glycosylated (N-linked (GlcNAc...) asparagine). A helical membrane pass occupies residues 157–177 (ALGIEIILTMLLVLAVCMGAV). Residues 178–183 (NEKTMG) are Cytoplasmic-facing. A helical membrane pass occupies residues 184-204 (PLAPFSIGFSVIVDILAGGSI). The Extracellular segment spans residues 205–228 (SGACMNPARAFGPAVMAGYWDFHW). Residues 210-212 (NPA) carry the NPA 2 motif. A helical transmembrane segment spans residues 229–249 (IYWLGPLLAGLFVGLLIRLLI). The Cytoplasmic portion of the chain corresponds to 250–261 (GDEKTRLILKSR).

It belongs to the MIP/aquaporin (TC 1.A.8) family. Sulfenylation at Cys-53(C53-SOH) when hydrogen peroxide flows through the AQP8 channel, making it susceptible to hydrogen sulfide produced by CBS. In terms of processing, persulfidation at Cys-53 is required to gate AQP8 channel; under stress condition, hydrogen peroxide accumulates in the cell leading to CBS activation that produces hydrogen sulfide inducing persulfidation of oxidized Cys-53 (C53-SOH). Post-translationally, N-glycosylated. In terms of tissue distribution, expressed in placenta. Highly expressed in the epithelial layer of gall-bladders. Expressed in heart, kidney, submandibular gland, liver, small intestine, colon, testes, and epididymis. In testes, expressed in spermatogenic cells.

It is found in the cell membrane. The protein resides in the mitochondrion inner membrane. It localises to the apical cell membrane. Its subcellular location is the basolateral cell membrane. The protein localises to the smooth endoplasmic reticulum membrane. The catalysed reaction is H2O(in) = H2O(out). The enzyme catalyses urea(in) = urea(out). It carries out the reaction NH4(+)(in) = NH4(+)(out). It catalyses the reaction H2O2(out) = H2O2(in). The catalysed reaction is formamide(out) = formamide(in). The enzyme catalyses methylamine(out) = methylamine(in). Reversibly gated by a two-step sulfenylation-persulfidation process in cells undergoing diverse stresses. In terms of biological role, channel that allows the facilitated permeation of water and uncharged molecules, such as hydrogen peroxide and the neutral form of ammonia (NH3), through cellular membranes such as plasma membrane, inner mitochondrial membrane and endoplasmic reticulum membrane of several tissues. The transport of ammonia neutral form induces a parallel transport of proton, at alkaline pH when the concentration of ammonia is high. However, it is unclear whether the transport of proton takes place via the aquaporin or via an endogenous pathway. Also, may transport ammonia analogs such as formamide and methylamine, a transport favourited at basic pH due to the increase of unprotonated (neutral) form, which is expected to favor diffusion. In vitro, may be also permeable to urea but not to glycerol. Does not transport urea or glycerol. The water transport mechanism is mercury- and copper-sensitive and passive in response to osmotic driving forces. At the canicular plasma membrane, mediates the osmotic transport of water toward the bile canaliculus and facilitates the cAMP-induced bile canalicular water secretion, a process involved in bile formation. In addition, mediates the hydrogen peroxide release from hepatocyte mitochondria that modulates the SREBF2-mediated cholesterol synthesis and facilitates the mitochondrial ammonia uptake which is metabolized into urea, mainly under glucagon stimulation. In B cells, transports the CYBB-generated hydrogen peroxide from the external leaflet of the plasma membrane to the cytosol to promote B cell activation and differentiation for signal amplification. In the small intestine and colon system, mediates water transport through mitochondria and apical membrane of epithelial cells. May play an important role in the adaptive response of proximal tubule cells to acidosis possibly facilitating mitochondrial ammonia transport. This chain is Aquaporin-8, found in Mus musculus (Mouse).